A 633-amino-acid chain; its full sequence is Extracellular metalloproteinase 5 (633 aa).

A signal peptide spans 1-21 (MHGLLLAAAGLLSLPLHVVAH). A propeptide spanning residues 22-245 (PQPSTSLAGR…HNVVDYVSHA (224 aa)) is cleaved from the precursor. N-linked (GlcNAc...) asparagine glycosylation occurs at Asn285. Residue His428 coordinates Zn(2+). Glu429 is a catalytic residue. His432 is a binding site for Zn(2+). Asn592 and Asn621 each carry an N-linked (GlcNAc...) asparagine glycan.

This sequence belongs to the peptidase M36 family. It depends on Zn(2+) as a cofactor.

Its subcellular location is the secreted. In terms of biological role, secreted metalloproteinase probably acting as a virulence factor. In Trichophyton rubrum (Athlete's foot fungus), this protein is Extracellular metalloproteinase 5 (MEP5).